Here is a 447-residue protein sequence, read N- to C-terminus: Argininosuccinate synthase (447 aa).

Residues Ala17 to Ser25 and Ala43 each bind ATP. Tyr99 lines the L-citrulline pocket. Residues Gly129 and Thr131 each contribute to the ATP site. Residues Thr131, Asn135, and Asp136 each coordinate L-aspartate. Residue Asn135 coordinates L-citrulline. Asp136 is a binding site for ATP. L-citrulline-binding residues include Arg139 and Ser192. Asp194 provides a ligand contact to ATP. L-citrulline-binding residues include Thr201, Glu203, and Glu280.

It belongs to the argininosuccinate synthase family. Type 2 subfamily. Homotetramer.

The protein resides in the cytoplasm. The enzyme catalyses L-citrulline + L-aspartate + ATP = 2-(N(omega)-L-arginino)succinate + AMP + diphosphate + H(+). The protein operates within amino-acid biosynthesis; L-arginine biosynthesis; L-arginine from L-ornithine and carbamoyl phosphate: step 2/3. The protein is Argininosuccinate synthase of Escherichia coli O139:H28 (strain E24377A / ETEC).